Consider the following 320-residue polypeptide: Cytochrome f (320 aa).

The first 35 residues, 1-35 (MQNRNTFSWVKEQMTRSISVSIIIYVITRTSISNA), serve as a signal peptide directing secretion. Heme-binding residues include Y36, C56, C59, and H60. Residues 286–306 (VQGLLFFLASIILAQIFLVLK) traverse the membrane as a helical segment.

The protein belongs to the cytochrome f family. In terms of assembly, the 4 large subunits of the cytochrome b6-f complex are cytochrome b6, subunit IV (17 kDa polypeptide, petD), cytochrome f and the Rieske protein, while the 4 small subunits are PetG, PetL, PetM and PetN. The complex functions as a dimer. Heme serves as cofactor.

It localises to the plastid. Its subcellular location is the chloroplast thylakoid membrane. Functionally, component of the cytochrome b6-f complex, which mediates electron transfer between photosystem II (PSII) and photosystem I (PSI), cyclic electron flow around PSI, and state transitions. This Chloranthus spicatus (Chulantree) protein is Cytochrome f.